An 892-amino-acid polypeptide reads, in one-letter code: Putative VWFA domain-containing protein ORF892 (892 aa).

Residues glutamate 109–leucine 548 form a disordered region. Over residues serine 129 to asparagine 142 the composition is skewed to polar residues. A compositionally biased stretch (basic and acidic residues) spans glutamine 143–glutamate 162. The span at glutamate 169–glutamine 184 shows a compositional bias: acidic residues. The segment covering glutamate 185–glutamate 196 has biased composition (basic and acidic residues). A compositionally biased stretch (acidic residues) spans glutamate 212 to serine 223. 2 stretches are compositionally biased toward low complexity: residues serine 224–glutamine 238 and glycine 271–glycine 283. A compositionally biased stretch (acidic residues) spans glycine 287–serine 300. Over residues glutamate 301–serine 323 the composition is skewed to low complexity. 2 stretches are compositionally biased toward acidic residues: residues glutamate 324–glutamate 336 and serine 425–glutamate 448. Residues serine 453–glutamine 466 are compositionally biased toward low complexity. Polar residues-rich tracts occupy residues proline 467–arginine 481 and glutamine 512–glutamate 531. A compositionally biased stretch (basic and acidic residues) spans glutamate 536–glutamate 546. A coiled-coil region spans residues glutamine 553 to valine 620. In terms of domain architecture, VWFA spans aspartate 723–histidine 892.

This Acidianus two-tailed virus (ATV) protein is Putative VWFA domain-containing protein ORF892.